The following is a 146-amino-acid chain: Acidic phospholipase A2 2 (146 aa).

Residues 1–21 (MTPAHLLILAAVCVSPLGASS) form the signal peptide. Positions 22–27 (SRPMPL) are excised as a propeptide. 7 cysteine pairs are disulfide-bonded: Cys38/Cys98, Cys53/Cys145, Cys55/Cys71, Cys70/Cys126, Cys77/Cys119, Cys87/Cys112, and Cys105/Cys117. Residues Tyr54, Gly56, and Gly58 each contribute to the Ca(2+) site. His74 is a catalytic residue. Residue Asp75 participates in Ca(2+) binding. Asp120 is a catalytic residue.

The protein belongs to the phospholipase A2 family. Group I subfamily. D49 sub-subfamily. It depends on Ca(2+) as a cofactor. As to expression, expressed by the venom gland.

It localises to the secreted. It carries out the reaction a 1,2-diacyl-sn-glycero-3-phosphocholine + H2O = a 1-acyl-sn-glycero-3-phosphocholine + a fatty acid + H(+). In terms of biological role, PLA2 catalyzes the calcium-dependent hydrolysis of the 2-acyl groups in 3-sn-phosphoglycerides. This is Acidic phospholipase A2 2 from Naja atra (Chinese cobra).